The following is a 3856-amino-acid chain: Serine/threonine-protein kinase ATM (3856 aa).

The PWWP domain maps to 108-162 (VGNLVWVMTKYKKWWPGEVVDFKADAKESFMVRSIGQSHLVSWFASSKLKPFKES). A disordered region spans residues 648–681 (GIPDLNGTNTEPTLVLPQVEPTQRRRRRKKEESP). The FAT domain occupies 2727–3393 (VVAGSAVVCG…ILQLLALANG (667 aa)). Positions 3233 to 3249 (RKHKTKELEVFIKRFKS) match the Bipartite nuclear localization signal motif. Residues 3499–3811 (LSDSVTVMNG…GNKDATRALM (313 aa)) form the PI3K/PI4K catalytic domain. The G-loop stretch occupies residues 3505-3511 (VMNGINA). A catalytic loop region spans residues 3678–3686 (GLGDRHAMN). Residues 3698 to 3722 (HIDLGVAFEQGLMLKTPERVPFRLT) are activation loop. The region spanning 3824–3856 (EMRSIHGQAQQLIQDAIDTDRLSHMFPGWGAWM) is the FATC domain.

It belongs to the PI3/PI4-kinase family. In terms of assembly, interacts with RUG3. As to expression, ubiquitously expressed at low levels with slightly higher levels in flower buds.

The protein localises to the nucleus. The catalysed reaction is L-seryl-[protein] + ATP = O-phospho-L-seryl-[protein] + ADP + H(+). It catalyses the reaction L-threonyl-[protein] + ATP = O-phospho-L-threonyl-[protein] + ADP + H(+). In terms of biological role, serine/threonine protein kinase which activates checkpoint signaling upon genotoxic stresses such as ionizing radiation (IR) or DNA replication stalling. Plays a central role in the perception and response to both stress-induced damage in somatic cells and developmentally programmed DNA damage during meiosis. Recognizes the substrate consensus sequence [ST]-Q. Phosphorylates histone variant H2AX to form H2AXS139ph at double strand breaks (DSBs), thereby regulating DNA damage response mechanism. Involved in transcriptional regulation of RAD51, PARP1, GR1, and LIG4 in response to DNA double strand breaks. Plays a dual role by activating the DNA damage response at dysfunctional telomeres and yet preventing this activation at functional telomeres. Not required for telomere length homeostasis. Regulates DNA damage response (DDR) synergistically with RUG3. Together with RUG3, involved in the splicing of the ND2/NAD2 mRNA. This chain is Serine/threonine-protein kinase ATM, found in Arabidopsis thaliana (Mouse-ear cress).